Reading from the N-terminus, the 147-residue chain is S-protein homolog 10 (147 aa).

The signal sequence occupies residues 1–20 (MNCFSYFFLVIILCAGLNNA).

It belongs to the plant self-incompatibility (S1) protein family.

It is found in the secreted. The polypeptide is S-protein homolog 10 (Arabidopsis thaliana (Mouse-ear cress)).